The sequence spans 630 residues: Pentatricopeptide repeat-containing protein At1g62670, mitochondrial (630 aa).

The transit peptide at 1-22 directs the protein to the mitochondrion; sequence MRISFAIASTAKRFVHRSLVVR. PPR repeat units follow at residues 44 to 79, 80 to 114, 115 to 149, 150 to 184, 185 to 219, 220 to 254, 255 to 289, 290 to 324, 325 to 359, 360 to 394, 395 to 429, 430 to 464, 465 to 499, 500 to 534, 535 to 569, and 570 to 604; these read TSYD…RPFP, SIIE…GIPH, NHYT…GYEP, NIVT…GYQP, NTVT…GCQP, DLVT…KLEP, GVLI…GIRP, NVVT…KINP, DVFT…SIDP, SIVT…HCFP, DVVT…GLVG, NTVT…GVPP, NIMT…KMEP, TIYT…GVKP, DVVA…GTLP, and NSGC…GFAG.

This sequence belongs to the PPR family. P subfamily.

It is found in the mitochondrion. The protein is Pentatricopeptide repeat-containing protein At1g62670, mitochondrial of Arabidopsis thaliana (Mouse-ear cress).